Reading from the N-terminus, the 1335-residue chain is Phospholipid-transporting ATPase IK (1335 aa).

Residues 1–74 (MDGVHLGENL…LYEQFHRMSN (74 aa)) are Cytoplasmic-facing. Residues 75 to 95 (LYFLFIIILQGIPEISTLPWF) traverse the membrane as a helical segment. Topologically, residues 96–295 (TLFAPLVCLF…LDLMMNKLVA (200 aa)) are exoplasmic loop. The helical transmembrane segment at 296–316 (LIFLSLVIASLLLTVGFTFMV) threads the bilayer. The Cytoplasmic portion of the chain corresponds to 317 to 339 (KQFKAKHYYMSPTHGRSDAMESF). A helical membrane pass occupies residues 340–360 (FIFWGFLILLSVMVPMAMFII). Residues 361-917 (AEFIYLGNSI…YMRVCKFLRY (557 aa)) lie on the Exoplasmic loop side of the membrane. The active-site 4-aspartylphosphate intermediate is the D407. ATP contacts are provided by D407, K408, T409, E504, F545, K568, R601, T681, G682, D683, R831, and K837. D407 provides a ligand contact to Mg(2+). Residue T409 coordinates Mg(2+). Residue D857 coordinates Mg(2+). N860 and D861 together coordinate ATP. Mg(2+) is bound at residue D861. A helical membrane pass occupies residues 918–938 (FFYKTVASMMAQIWFSLVNGF). Residues 939-946 (SAQPLYEG) are Cytoplasmic-facing. Residues 947–967 (WFLALFNLLYSTLPVLYIGLF) traverse the membrane as a helical segment. Topologically, residues 968–995 (EQDVTAEKSLKMPELYMAGQKGELFNYS) are exoplasmic loop. A helical membrane pass occupies residues 996-1016 (IFMQAITHGTITSMINFFVTV). Residues 1017–1033 (MVSSDMSKAGSSHDYQS) lie on the Cytoplasmic side of the membrane. The helical transmembrane segment at 1034-1054 (LGVLVAISSLLSVTLEVMLVV) threads the bilayer. K1055 is a topological domain (exoplasmic loop). A helical transmembrane segment spans residues 1056–1076 (YWTLLFVGAVVLSLSSYVLMT). The Cytoplasmic segment spans residues 1077–1104 (SLTQSLWMYRISPKTFPFLFADYNVLFE). The chain crosses the membrane as a helical span at residues 1105–1125 (PCSLLLIVLNVALNVLPMLAL). Residues 1126-1335 (RTIHRTVLKQ…SQLEVPRKQS (210 aa)) lie on the Exoplasmic loop side of the membrane. Disordered stretches follow at residues 1192–1215 (VDDS…PLQN), 1236–1280 (FGKG…GKLL), and 1314–1335 (SPLW…RKQS). Composition is skewed to polar residues over residues 1246 to 1255 (PNTSSQTMEK) and 1266 to 1276 (QKLPTTTSATS).

This sequence belongs to the cation transport ATPase (P-type) (TC 3.A.3) family. Type IV subfamily. The cofactor is Mg(2+). Expressed in testis, specifically in spermatids within seminiferous tubules (at protein level).

The protein resides in the cytoplasmic vesicle. The protein localises to the secretory vesicle. Its subcellular location is the acrosome membrane. It is found in the endoplasmic reticulum membrane. The catalysed reaction is ATP + H2O + phospholipidSide 1 = ADP + phosphate + phospholipidSide 2.. It carries out the reaction a 1,2-diacyl-sn-glycero-3-phospho-L-serine(out) + ATP + H2O = a 1,2-diacyl-sn-glycero-3-phospho-L-serine(in) + ADP + phosphate + H(+). In terms of biological role, P4-ATPase flippase which catalyzes the hydrolysis of ATP coupled to the transport of aminophospholipids from the outer to the inner leaflet of various membranes and ensures the maintenance of asymmetric distribution of phospholipids. Phospholipid translocation also seems to be implicated in vesicle formation and in uptake of lipid signaling molecules. May be responsible for the maintenance of asymmetric distribution of phosphatidylserine (PS) in spermatozoa membranes. Involved in acrosome reactions and binding of spermatozoa to zona pellucida. The protein is Phospholipid-transporting ATPase IK of Mus musculus (Mouse).